The primary structure comprises 1580 residues: Dynamin-binding protein (1580 aa).

M1 is subject to N-acetylmethionine. SH3 domains lie at 2 to 61 (EPGS…IVTI), 66 to 127 (EGER…ELCL), and 146 to 205 (YSLG…LLGP). Disordered stretches follow at residues 211 to 245 (ESVNSRSGDDSAVNGEVDVPPEEAESGGDEDDQQS), 304 to 446 (NRTE…LVPL), 500 to 546 (YAQK…DSLD), and 589 to 688 (RGSS…AQTF). Over residues 229 to 243 (VPPEEAESGGDEDDQ) the composition is skewed to acidic residues. The 60-residue stretch at 244–303 (QSGTYGIALYRFQALETNELDFEVGDRIQILGTLEDGWLEGCLKGKTGVFPHRFVKLCPS) folds into the SH3 4 domain. Composition is skewed to polar residues over residues 422–439 (QKSQHYLTAGGSHQTSDP) and 502–513 (QKHQTSTENTAS). Residues 516 to 527 (DPPERPERRPGL) show a composition bias toward basic and acidic residues. Residues 608-617 (RPPPPRPRTP) are compositionally biased toward pro residues. The span at 671 to 682 (APEKEDSEHMEK) shows a compositional bias: basic and acidic residues. S683 is subject to Phosphoserine. A coiled-coil region spans residues 694 to 755 (LARIRDVEQD…LELQQLRDMT (62 aa)). In terms of domain architecture, DH spans 783–970 (KRAKVVAELL…KEINVNINEY (188 aa)). A BAR domain is found at 1011–1220 (LKHLTGFAPQ…LKATDREGNL (210 aa)). Residues 1288 to 1351 (PPEKLFHVQR…YSSFLKPYNP (64 aa)) enclose the SH3 5 domain. Positions 1356 to 1365 (SDASVASHSS) are enriched in low complexity. Disordered regions lie at residues 1356 to 1384 (SDASVASHSSTESEHSGSSPGCHRQNSHS) and 1426 to 1514 (TGHP…GSSE). Residues 1426–1440 (TGHPETGPSTCSSDP) are compositionally biased toward polar residues. Residues 1516 to 1579 (EGNQVYFAIY…PSNYIRKTEY (64 aa)) enclose the SH3 6 domain.

As to quaternary structure, binds DNM1 via its N-terminal SH3 domains. The C-terminal SH3 domain binds a complex containing actin, tubulin, Hsp70 and actin-regulatory proteins, such as ENAH, EVL, WIRE, CR16, WAVE1 and NAP1L1. Interacts with FASLG. Interacts (via SH3 domain 6) with WASL. Interacts (via SH3 domain 6) interacts with ENAH. Interacts (via C-terminal domain) with TJP1; required for the apical cell-cell junction localization of DNMBP.

The protein localises to the cytoplasm. Its subcellular location is the golgi apparatus. It localises to the golgi stack. The protein resides in the cytoskeleton. It is found in the synapse. The protein localises to the cell junction. In terms of biological role, plays a critical role as a guanine nucleotide exchange factor (GEF) for CDC42 in several intracellular processes associated with the actin and microtubule cytoskeleton. Regulates the structure of apical junctions in epithelial cells. Participates in the normal lumenogenesis of epithelial cell cysts by regulating spindle orientation. Plays a role in ciliogenesis. May play a role in membrane trafficking between the cell surface and the Golgi. The protein is Dynamin-binding protein of Mus musculus (Mouse).